Here is an 802-residue protein sequence, read N- to C-terminus: G-type lectin S-receptor-like serine/threonine-protein kinase At1g61550 (802 aa).

Positions M1 to A19 are cleaved as a signal peptide. In terms of domain architecture, Bulb-type lectin spans A20–F139. Residues A20 to T421 lie on the Extracellular side of the membrane. N48, N89, N112, N231, and N262 each carry an N-linked (GlcNAc...) asparagine glycan. The region spanning P273–E309 is the EGF-like domain. 2 disulfides stabilise this stretch: C277–C289 and C283–C297. 3 N-linked (GlcNAc...) asparagine glycosylation sites follow: N315, N331, and N370. Positions C328–S410 constitute a PAN domain. 2 disulfide bridges follow: C363–C384 and C367–C373. A helical membrane pass occupies residues I422–F442. Residues W443–R802 are Cytoplasmic-facing. One can recognise a Protein kinase domain in the interval F489–F774. ATP-binding positions include L495–V503 and K517. S523 and S538 each carry phosphoserine. The segment at R578–I595 is caM-binding. D614 functions as the Proton acceptor in the catalytic mechanism. A phosphoserine mark is found at S618 and S631. Residue T648 is modified to Phosphothreonine. Residue S691 is modified to Phosphoserine.

The protein belongs to the protein kinase superfamily. Ser/Thr protein kinase family.

It localises to the cell membrane. The catalysed reaction is L-seryl-[protein] + ATP = O-phospho-L-seryl-[protein] + ADP + H(+). It carries out the reaction L-threonyl-[protein] + ATP = O-phospho-L-threonyl-[protein] + ADP + H(+). The chain is G-type lectin S-receptor-like serine/threonine-protein kinase At1g61550 from Arabidopsis thaliana (Mouse-ear cress).